A 199-amino-acid chain; its full sequence is Dephospho-CoA kinase (199 aa).

The 197-residue stretch at 3–199 (ILGLTGSIGM…ATAKMPQRRA (197 aa)) folds into the DPCK domain. 11 to 16 (GMGKST) is a binding site for ATP.

Belongs to the CoaE family.

Its subcellular location is the cytoplasm. It carries out the reaction 3'-dephospho-CoA + ATP = ADP + CoA + H(+). It participates in cofactor biosynthesis; coenzyme A biosynthesis; CoA from (R)-pantothenate: step 5/5. Its function is as follows. Catalyzes the phosphorylation of the 3'-hydroxyl group of dephosphocoenzyme A to form coenzyme A. In Rhodopseudomonas palustris (strain BisB18), this protein is Dephospho-CoA kinase.